Consider the following 155-residue polypeptide: MAIADNKKARFNYTIEEQFEAGMVLEGWEVKAIRAGQVQLTDGYVVVKDGELFLIGCRINPLRTASTHVHPQADRTKKLLMKKDEIRRLVGKVEQKGYTLVPLNLHYKGGRVKADIALAKGKDLHDKRETEKKRDWEREKGQLMRHKISSPRKDT.

The segment covering 123 to 142 (DLHDKRETEKKRDWEREKGQ) has biased composition (basic and acidic residues). A disordered region spans residues 123-155 (DLHDKRETEKKRDWEREKGQLMRHKISSPRKDT). Residues 143–155 (LMRHKISSPRKDT) are compositionally biased toward basic residues.

This sequence belongs to the SmpB family.

Its subcellular location is the cytoplasm. Its function is as follows. Required for rescue of stalled ribosomes mediated by trans-translation. Binds to transfer-messenger RNA (tmRNA), required for stable association of tmRNA with ribosomes. tmRNA and SmpB together mimic tRNA shape, replacing the anticodon stem-loop with SmpB. tmRNA is encoded by the ssrA gene; the 2 termini fold to resemble tRNA(Ala) and it encodes a 'tag peptide', a short internal open reading frame. During trans-translation Ala-aminoacylated tmRNA acts like a tRNA, entering the A-site of stalled ribosomes, displacing the stalled mRNA. The ribosome then switches to translate the ORF on the tmRNA; the nascent peptide is terminated with the 'tag peptide' encoded by the tmRNA and targeted for degradation. The ribosome is freed to recommence translation, which seems to be the essential function of trans-translation. This chain is SsrA-binding protein, found in Methylibium petroleiphilum (strain ATCC BAA-1232 / LMG 22953 / PM1).